We begin with the raw amino-acid sequence, 112 residues long: Protein GAST1 (112 aa).

A signal peptide spans 1-25; it reads MAGKMSIVLFVLLVVFLTQNQVSRA.

Belongs to the GASA family. In terms of processing, six disulfide bonds may be present. In terms of tissue distribution, all shoot organs.

Its subcellular location is the secreted. In Solanum lycopersicum (Tomato), this protein is Protein GAST1 (GAST1).